A 228-amino-acid chain; its full sequence is Thermonuclease (228 aa).

An N-terminal signal peptide occupies residues 1–23 (MTEYLLSAGICMAIVSILLIGMA). A propeptide spanning residues 24–60 (ISNVSKEQYAKRFFFFATSCLVLTLVVASSLSSSANA) is cleaved from the precursor. D100 provides a ligand contact to Ca(2+). The active site involves R114. 2 residues coordinate Ca(2+): D119 and T120. Active-site residues include E122 and R166.

The protein belongs to the thermonuclease family. Ca(2+) is required as a cofactor.

The protein resides in the secreted. The enzyme catalyses Endonucleolytic cleavage to nucleoside 3'-phosphates and 3'-phosphooligonucleotide end-products.. Its function is as follows. Enzyme that catalyzes the hydrolysis of both DNA and RNA at the 5' position of the phosphodiester bond. The protein is Thermonuclease (nuc) of Staphylococcus aureus (strain MRSA252).